An 88-amino-acid polypeptide reads, in one-letter code: C-C motif chemokine 18 (88 aa).

Positions 1 to 19 are cleaved as a signal peptide; that stretch reads MKGLAAALLVLCTVALCSC. 2 disulfide bridges follow: Cys-29/Cys-53 and Cys-30/Cys-69.

Belongs to the intercrine beta (chemokine CC) family. In terms of processing, the Cys-29/Cys-53 disulfide bond is required for activity.

The protein localises to the secreted. Functionally, chemotactic factor that attracts lymphocytes but not monocytes or granulocytes. May be involved in B-cell migration into B-cell follicles in lymph nodes. Attracts naive T-lymphocytes toward dendritic cells and activated macrophages in lymph nodes, has chemotactic activity for naive T-cells, CD4+ and CD8+ T-cells and thus may play a role in both humoral and cell-mediated immunity responses. This is C-C motif chemokine 18 (CCL18) from Macaca mulatta (Rhesus macaque).